Consider the following 269-residue polypeptide: Eukaryotic translation initiation factor 3 subunit G-1 (269 aa).

The region spanning 188–266 (AAIRISNLSE…LILSVEWSKP (79 aa)) is the RRM domain.

It belongs to the eIF-3 subunit G family. As to quaternary structure, component of the eukaryotic translation initiation factor 3 (eIF-3) complex. The eIF-3 complex interacts with pix.

Its subcellular location is the cytoplasm. RNA-binding component of the eukaryotic translation initiation factor 3 (eIF-3) complex, which is involved in protein synthesis of a specialized repertoire of mRNAs and, together with other initiation factors, stimulates binding of mRNA and methionyl-tRNAi to the 40S ribosome. The eIF-3 complex specifically targets and initiates translation of a subset of mRNAs involved in cell proliferation. This subunit can bind 18S rRNA. The protein is Eukaryotic translation initiation factor 3 subunit G-1 of Drosophila erecta (Fruit fly).